A 405-amino-acid polypeptide reads, in one-letter code: CMP-sialic acid transporter 5 (405 aa).

The Cytoplasmic segment spans residues 1–43 (MQRNGVVECSVCRSRLVVPSPRSVSRAYDKHRSKISSKFRALN). A helical transmembrane segment spans residues 44–64 (VLLVVGDCILVGLQPILVFMS). Topologically, residues 65–74 (KVDGKFQFSP) are lumenal. The helical transmembrane segment at 75-95 (ISVNFLTEVTKVVFAIVMLII) threads the bilayer. Residues 96–121 (QSRKQKVGEKPLLARSTFIQAARNNA) lie on the Cytoplasmic side of the membrane. Residues 122-142 (LLAVPALLYAINNYLKFIMQL) traverse the membrane as a helical segment. Over 143 to 147 (YFNPS) the chain is Lumenal. Residues 148–168 (TVKMLSNLKVLVIAVLLKFIM) traverse the membrane as a helical segment. Over 169–171 (KRR) the chain is Cytoplasmic. A helical transmembrane segment spans residues 172 to 192 (FSVIQWEALALLLIGISINQL). Residues 193–200 (RTVPAGNT) lie on the Lumenal side of the membrane. Residues 201-221 (AFGLPVTAIAYIYTLIFVTVP) form a helical membrane-spanning segment. The Cytoplasmic segment spans residues 222–244 (SLASVYNEYALKSQYDTSIYLQN). A helical transmembrane segment spans residues 245–265 (LFLYGYGAIFNFLGILGTALF). The Lumenal portion of the chain corresponds to 266–281 (QGPESFNILRGHSRAT). Residues 282 to 302 (MFLICNNAAQGILSSFFFKYA) form a helical membrane-spanning segment. Over 303-322 (DTILKKYSSTVATIFTGLAS) the chain is Cytoplasmic. A helical transmembrane segment spans residues 323–343 (AAFLGHTLTINFLLGISVVFI). The Lumenal segment spans residues 344 to 405 (SMHQFFSPLA…TDERQPLLPT (62 aa)). Residues 368-405 (DTQNHRSSESSFVNMTAGAAEDASHRIGTDERQPLLPT) form a disordered region. Positions 389 to 405 (DASHRIGTDERQPLLPT) are enriched in basic and acidic residues.

This sequence belongs to the nucleotide-sugar transporter family. CMP-Sialate:CMP antiporter (TC 2.A.7.12) subfamily.

It is found in the golgi apparatus membrane. Its function is as follows. Sugar transporter involved in the transport of CMP-sialic acid from the cytoplasm into the Golgi. May transport important nucleotide sugars such as CMP-Kdo (2-keto-3-deoxy-D-manno-octulosonic acid) in physiological conditions. This Oryza sativa subsp. japonica (Rice) protein is CMP-sialic acid transporter 5.